The chain runs to 65 residues: uncharacterized protein (65 aa).

This is an uncharacterized protein from Bacillus subtilis (strain 168).